The primary structure comprises 176 residues: Large ribosomal subunit protein uL10 (176 aa).

Belongs to the universal ribosomal protein uL10 family. In terms of assembly, part of the ribosomal stalk of the 50S ribosomal subunit. The N-terminus interacts with L11 and the large rRNA to form the base of the stalk. The C-terminus forms an elongated spine to which L12 dimers bind in a sequential fashion forming a multimeric L10(L12)X complex.

In terms of biological role, forms part of the ribosomal stalk, playing a central role in the interaction of the ribosome with GTP-bound translation factors. The sequence is that of Large ribosomal subunit protein uL10 from Dehalococcoides mccartyi (strain ATCC BAA-2100 / JCM 16839 / KCTC 5957 / BAV1).